The primary structure comprises 230 residues: Probable septum site-determining protein MinC (230 aa).

The protein belongs to the MinC family. As to quaternary structure, interacts with MinD and FtsZ.

In terms of biological role, cell division inhibitor that blocks the formation of polar Z ring septums. Rapidly oscillates between the poles of the cell to destabilize FtsZ filaments that have formed before they mature into polar Z rings. Prevents FtsZ polymerization. This is Probable septum site-determining protein MinC from Cronobacter sakazakii (strain ATCC BAA-894) (Enterobacter sakazakii).